We begin with the raw amino-acid sequence, 857 residues long: Blue light receptor lreA (857 aa).

3 consecutive PAS domains span residues 306 to 328 (IIYV…VGQN), 479 to 542 (LVEN…TTTD), and 608 to 642 (LSKS…DLMD). The GATA-type zinc finger occupies 811–836 (CAICQTKKTPEWRRGPSGERDLCNSC).

Its function is as follows. Transcription factor that acts as a blue light sensor. Plays crucial roles in fungal growth and asexual development. Involved in conidiophore formation, sclerotium production, and conidial stress tolerance. Promotes conidiation by inducing the expression of brlA and abaA. Positively regulates the fungal pathogenicity towards maize. In blue light conditions, inhibits aflatoxin B1 (AFB1) biosynthesis by down-regulating the expression of key genes such as aflA, aflJ, aflH, aflO and aflK. The polypeptide is Blue light receptor lreA (Aspergillus flavus).